A 521-amino-acid chain; its full sequence is MIKQALISVSDKTGIVDFAKSLSDLGVKLLSTGGTAKLLADAGLPVTEVADYTGFPEMLDGRVKTLHPKVHGGILARRDLPEHMQALEQHGIPTIDLLVVNLYPFVATIAKDDCTLADAIENIDIGGPTMLRSAAKNHRDVTVVVDPADYAVVLDEMKANGNTVGYPTNFRLATKVFAHTAQYDGAITNYLTSLTDELKHASRSAYPATLNLAFDKVQDLRYGENPHQSAAFYRDLAAPAGALANYRQLQGKELSYNNIADSDAAWECVKTFDAPACVIIKHANPCGVAVGNDSADAYAKAFQTDPTSAFGGIIAFNREVDEAAAQAVAKQFVEVLIAPSFSDAAKQVFAAKQNVRLLEIALGDGHNAFDLKRVGGGLLVQSLDSKNVQPHELRVVTKRHPTPKEMDDLLFAWRVAKYVKSNAIVFCGNGMTLGVGAGQMSRVDSARIASIKAQNAGLTLTGSAVASDAFFPFRDGLDVVVAAGATCVIQPGGSMRDDEVIAAADEHNIAMILTGVRHFRH.

The MGS-like domain maps to 1 to 145 (MIKQALISVS…KNHRDVTVVV (145 aa)).

The protein belongs to the PurH family.

The catalysed reaction is (6R)-10-formyltetrahydrofolate + 5-amino-1-(5-phospho-beta-D-ribosyl)imidazole-4-carboxamide = 5-formamido-1-(5-phospho-D-ribosyl)imidazole-4-carboxamide + (6S)-5,6,7,8-tetrahydrofolate. The enzyme catalyses IMP + H2O = 5-formamido-1-(5-phospho-D-ribosyl)imidazole-4-carboxamide. It functions in the pathway purine metabolism; IMP biosynthesis via de novo pathway; 5-formamido-1-(5-phospho-D-ribosyl)imidazole-4-carboxamide from 5-amino-1-(5-phospho-D-ribosyl)imidazole-4-carboxamide (10-formyl THF route): step 1/1. Its pathway is purine metabolism; IMP biosynthesis via de novo pathway; IMP from 5-formamido-1-(5-phospho-D-ribosyl)imidazole-4-carboxamide: step 1/1. The polypeptide is Bifunctional purine biosynthesis protein PurH (Burkholderia cenocepacia (strain ATCC BAA-245 / DSM 16553 / LMG 16656 / NCTC 13227 / J2315 / CF5610) (Burkholderia cepacia (strain J2315))).